Reading from the N-terminus, the 456-residue chain is tRNA-2-methylthio-N(6)-dimethylallyladenosine synthase (456 aa).

Residues 3–120 enclose the MTTase N-terminal domain; sequence KKVYVKTFGC…LPQMIDQRRA (118 aa). 6 residues coordinate [4Fe-4S] cluster: C12, C49, C83, C157, C161, and C164. The Radical SAM core domain occupies 143 to 377; that stretch reads RIDGPSAFVS…QATIEENVQR (235 aa). A TRAM domain is found at 380-447; the sequence is QAMVGKVERI…PHSLRGELVM (68 aa).

The protein belongs to the methylthiotransferase family. MiaB subfamily. Monomer. [4Fe-4S] cluster is required as a cofactor.

The protein resides in the cytoplasm. It catalyses the reaction N(6)-dimethylallyladenosine(37) in tRNA + (sulfur carrier)-SH + AH2 + 2 S-adenosyl-L-methionine = 2-methylsulfanyl-N(6)-dimethylallyladenosine(37) in tRNA + (sulfur carrier)-H + 5'-deoxyadenosine + L-methionine + A + S-adenosyl-L-homocysteine + 2 H(+). Functionally, catalyzes the methylthiolation of N6-(dimethylallyl)adenosine (i(6)A), leading to the formation of 2-methylthio-N6-(dimethylallyl)adenosine (ms(2)i(6)A) at position 37 in tRNAs that read codons beginning with uridine. The sequence is that of tRNA-2-methylthio-N(6)-dimethylallyladenosine synthase from Paraburkholderia phymatum (strain DSM 17167 / CIP 108236 / LMG 21445 / STM815) (Burkholderia phymatum).